Consider the following 152-residue polypeptide: 3-dehydroquinate dehydratase (152 aa).

Tyrosine 26 serves as the catalytic Proton acceptor. The substrate site is built by asparagine 78, histidine 84, and aspartate 91. Catalysis depends on histidine 104, which acts as the Proton donor. Substrate contacts are provided by residues 105-106 (LS) and arginine 115.

This sequence belongs to the type-II 3-dehydroquinase family. As to quaternary structure, homododecamer.

It catalyses the reaction 3-dehydroquinate = 3-dehydroshikimate + H2O. The protein operates within metabolic intermediate biosynthesis; chorismate biosynthesis; chorismate from D-erythrose 4-phosphate and phosphoenolpyruvate: step 3/7. Functionally, catalyzes a trans-dehydration via an enolate intermediate. The chain is 3-dehydroquinate dehydratase from Idiomarina loihiensis (strain ATCC BAA-735 / DSM 15497 / L2-TR).